Here is a 145-residue protein sequence, read N- to C-terminus: Basic phospholipase A2 GL1-1 (145 aa).

The first 21 residues, Met-1–Ala-21, serve as a signal peptide directing secretion. Positions Ile-22–Leu-27 are excised as a propeptide. Cystine bridges form between Cys-38/Cys-98, Cys-54/Cys-144, Cys-56/Cys-72, Cys-71/Cys-125, Cys-78/Cys-118, Cys-87/Cys-111, and Cys-105/Cys-116. Ca(2+) is bound by residues Tyr-55, Gly-57, and Gly-59. His-75 is an active-site residue. Asp-76 contacts Ca(2+). Residue Asp-119 is part of the active site.

It belongs to the phospholipase A2 family. Group I subfamily. D49 sub-subfamily. It depends on Ca(2+) as a cofactor. In terms of tissue distribution, expressed by the venom gland.

It localises to the secreted. It catalyses the reaction a 1,2-diacyl-sn-glycero-3-phosphocholine + H2O = a 1-acyl-sn-glycero-3-phosphocholine + a fatty acid + H(+). PLA2 catalyzes the calcium-dependent hydrolysis of the 2-acyl groups in 3-sn-phosphoglycerides. The chain is Basic phospholipase A2 GL1-1 from Laticauda semifasciata (Black-banded sea krait).